A 214-amino-acid polypeptide reads, in one-letter code: Large ribosomal subunit protein uL3 (214 aa).

Residues 119–159 form a disordered region; the sequence is GVKRHGFAGGPKTHGQSDRHRAPGSIGPTTDPGRVHKGKRM.

This sequence belongs to the universal ribosomal protein uL3 family. In terms of assembly, part of the 50S ribosomal subunit. Forms a cluster with proteins L14 and L19.

Functionally, one of the primary rRNA binding proteins, it binds directly near the 3'-end of the 23S rRNA, where it nucleates assembly of the 50S subunit. The chain is Large ribosomal subunit protein uL3 from Thermomicrobium roseum (strain ATCC 27502 / DSM 5159 / P-2).